The chain runs to 87 residues: Phosphoribosyl-ATP pyrophosphatase (87 aa).

This sequence belongs to the PRA-PH family.

The protein localises to the cytoplasm. It catalyses the reaction 1-(5-phospho-beta-D-ribosyl)-ATP + H2O = 1-(5-phospho-beta-D-ribosyl)-5'-AMP + diphosphate + H(+). It functions in the pathway amino-acid biosynthesis; L-histidine biosynthesis; L-histidine from 5-phospho-alpha-D-ribose 1-diphosphate: step 2/9. This is Phosphoribosyl-ATP pyrophosphatase (hisE) from Corynebacterium glutamicum (strain ATCC 13032 / DSM 20300 / JCM 1318 / BCRC 11384 / CCUG 27702 / LMG 3730 / NBRC 12168 / NCIMB 10025 / NRRL B-2784 / 534).